The chain runs to 274 residues: 4-deoxy-L-threo-5-hexosulose-uronate ketol-isomerase (274 aa).

Zn(2+)-binding residues include His-192, His-194, Glu-199, and His-241.

This sequence belongs to the KduI family. The cofactor is Zn(2+).

It carries out the reaction 5-dehydro-4-deoxy-D-glucuronate = 3-deoxy-D-glycero-2,5-hexodiulosonate. The protein operates within glycan metabolism; pectin degradation; 2-dehydro-3-deoxy-D-gluconate from pectin: step 4/5. Its function is as follows. Catalyzes the isomerization of 5-dehydro-4-deoxy-D-glucuronate to 3-deoxy-D-glycero-2,5-hexodiulosonate. This is 4-deoxy-L-threo-5-hexosulose-uronate ketol-isomerase from Cereibacter sphaeroides (strain ATCC 17025 / ATH 2.4.3) (Rhodobacter sphaeroides).